Consider the following 841-residue polypeptide: MFALVLAVVILPLWTTANKSYVTPTPATRSIGHMSALLREYSDRNMSLKLEAFYPTGFDEELIKSLHWGNDRKHVFLVIVKVNPTTHEGDVGLVIFPKYLLSPYHFKAEHRAPFPAGRFGFLSHPVTPDVSFFDSSFAPYLTTQHLVAFTTFPPNPLVWHLERAETAATAERPFGVSLLPARPTVPKNTILEHKAHFATWDALARHTFFSAEAIITNSTLRIHVPLFGSVWPIRYWATGSVLLTSDSGRVEVNIGVGFMSSLISLSSGLPIELIVVPHTVKLNAVTSDTTWFQLNPPGPDPGPSYRVYLLGRGLDMNFSKHATVDICAYPEESLDYRYHLSMAHTEALRMTTKADQHDINEESYYHIAARIATSIFALSEMGRTTEYFLLDEIVDVQYQLKFLNYILMRIGAGAHPNTISGTSDLIFADPSQLHDELSLLFGQVKPANVDYFISYDEARDQLKTAYALSRGQDHVNALSLARRVIMSIYKGLLVKQNLNATERQALFFASMILLNFREGLENSSRVLDGRTTLLLMTSMCTAAHATQAALNIQEGLAYLNPSKHMFTIPNVYSPCMGSLRTDLTEEIHVMNLLSAIPTRPGLNEVLHTQLDESEIFDAAFKTMMIFTTWTAKDLHILHTHVPEVFTCQDAAARNGEYVLILPAVQGHSYVITRNKPQRGLVYSLADVDVYNPISVVYLSKDTCVSEHGVIETVALPHPDNLKECLYCGSVFLRYLTTGAIMDIIIIDSKDTERQLAAMGNSTIPPFNPDMHGDDSKAVLLFPNGTVVTLLGFERRQAIRMSGQYLGASLGGAFLAVVGFGIIGWMLCGNSRLREYNKIPLT.

An N-terminal signal peptide occupies residues Met-1–Ala-17. N-linked (GlcNAc...) asparagine; by host glycosylation is found at Asn-18, Asn-45, and Asn-217. Over Asn-18–Gly-802 the chain is Virion surface. An interaction with gL region spans residues Asp-246–Leu-309. 5 N-linked (GlcNAc...) asparagine; by host glycosylation sites follow: Asn-317, Asn-499, Asn-522, Asn-760, and Asn-783. Residues Gln-803–Gly-823 form a helical membrane-spanning segment. At Trp-824 to Thr-841 the chain is on the intravirion side.

The protein belongs to the herpesviridae glycoprotein H family. In terms of assembly, interacts with glycoprotein L (gL); this interaction is necessary for the correct processing and cell surface expression of gH. The heterodimer gH/gL seems to interact with gB trimers during fusion. N-glycosylated, O-glycosylated, and sialylated.

The protein localises to the virion membrane. It is found in the host cell membrane. Its subcellular location is the host endosome membrane. The heterodimer glycoprotein H-glycoprotein L is required for the fusion of viral and plasma membranes leading to virus entry into the host cell. Following initial binding to host receptor, membrane fusion is mediated by the fusion machinery composed of gB and the heterodimer gH/gL. May also be involved in the fusion between the virion envelope and the outer nuclear membrane during virion morphogenesis. The polypeptide is Envelope glycoprotein H (Varicella-zoster virus (strain Oka vaccine) (HHV-3)).